Consider the following 386-residue polypeptide: Acetylornithine aminotransferase (386 aa).

Residues 94-95 (GT) and F121 each bind pyridoxal 5'-phosphate. Residue R124 coordinates N(2)-acetyl-L-ornithine. A pyridoxal 5'-phosphate-binding site is contributed by 206–209 (DEVQ). K235 bears the N6-(pyridoxal phosphate)lysine mark. Residue S263 participates in N(2)-acetyl-L-ornithine binding. A pyridoxal 5'-phosphate-binding site is contributed by T264.

This sequence belongs to the class-III pyridoxal-phosphate-dependent aminotransferase family. ArgD subfamily. As to quaternary structure, homodimer. Requires pyridoxal 5'-phosphate as cofactor.

It localises to the cytoplasm. It catalyses the reaction N(2)-acetyl-L-ornithine + 2-oxoglutarate = N-acetyl-L-glutamate 5-semialdehyde + L-glutamate. Its pathway is amino-acid biosynthesis; L-arginine biosynthesis; N(2)-acetyl-L-ornithine from L-glutamate: step 4/4. The chain is Acetylornithine aminotransferase from Listeria monocytogenes serotype 4b (strain F2365).